A 508-amino-acid polypeptide reads, in one-letter code: GMP synthase [glutamine-hydrolyzing] (508 aa).

Residues 1 to 189 form the Glutamine amidotransferase type-1 domain; it reads MIVVLDFGSQ…ALLVCGCEKT (189 aa). C78 acts as the Nucleophile in catalysis. Active-site residues include H163 and E165. Residues 190–383 form the GMPS ATP-PPase domain; that stretch reads WGMQNFAQKE…LGVSQDFLMR (194 aa). 217–223 contacts ATP; it reads SGGVDST.

Homodimer.

It carries out the reaction XMP + L-glutamine + ATP + H2O = GMP + L-glutamate + AMP + diphosphate + 2 H(+). It participates in purine metabolism; GMP biosynthesis; GMP from XMP (L-Gln route): step 1/1. In terms of biological role, catalyzes the synthesis of GMP from XMP. This is GMP synthase [glutamine-hydrolyzing] from Helicobacter acinonychis (strain Sheeba).